Consider the following 520-residue polypeptide: 2-isopropylmalate synthase (520 aa).

Positions 12–274 (IRIFDTTLRD…DTAINTPRIV (263 aa)) constitute a Pyruvate carboxyltransferase domain. Mn(2+)-binding residues include Asp21, His209, His211, and Asn245. A regulatory domain region spans residues 396–520 (RLASMTISDV…VVAGKTAAVA (125 aa)).

It belongs to the alpha-IPM synthase/homocitrate synthase family. LeuA type 1 subfamily. As to quaternary structure, homodimer. The cofactor is Mn(2+).

The protein localises to the cytoplasm. It carries out the reaction 3-methyl-2-oxobutanoate + acetyl-CoA + H2O = (2S)-2-isopropylmalate + CoA + H(+). It participates in amino-acid biosynthesis; L-leucine biosynthesis; L-leucine from 3-methyl-2-oxobutanoate: step 1/4. Catalyzes the condensation of the acetyl group of acetyl-CoA with 3-methyl-2-oxobutanoate (2-ketoisovalerate) to form 3-carboxy-3-hydroxy-4-methylpentanoate (2-isopropylmalate). This chain is 2-isopropylmalate synthase, found in Xanthomonas campestris pv. campestris (strain B100).